Reading from the N-terminus, the 402-residue chain is Transcription regulatory protein OpdE (402 aa).

Helical transmembrane passes span 22 to 42 (VLAIAVCAFALVASEFLPVSL), 60 to 80 (GIAISGAFAVLTSLFISSVAG), 86 to 106 (TLLLGLTAAMGMSGAIVALAP), 108 to 128 (YFVYMLGRALIGIVIGGFWSM), 147 to 167 (ALVNGGNALATVVAAPLGAWL), 170 to 190 (LIGWRGAFLCLVPVALVALAW), 220 to 240 (PGVMLGMLASSLFFMGQFSLF), 256 to 276 (AHVSLVLLVIGAAGFIGTLLI), 296 to 316 (ALIALVLTVLGGWPAIVVVLL), 318 to 338 (LWGLTGTSAPVGWWAWIARVF), 348 to 368 (LFVAVVQLSIALGSTLGGLLF), and 375 to 395 (ATFFASAAMLLIAAFLTILTA).

The protein to B.subtilis YwfA.

The protein resides in the cell membrane. Regulates the expression of oprD which encodes the imipenem-specific porin. This is Transcription regulatory protein OpdE (opdE) from Pseudomonas aeruginosa (strain ATCC 15692 / DSM 22644 / CIP 104116 / JCM 14847 / LMG 12228 / 1C / PRS 101 / PAO1).